The chain runs to 232 residues: Ras-related protein RabP (232 aa).

15-22 (GNYGVGKS) provides a ligand contact to GTP. Residues 35 to 40 (DNTTGF) carry the Effector region motif. Residues 58–62 (DTSGQ) and 118–121 (NKFD) contribute to the GTP site. S-geranylgeranyl cysteine attachment occurs at residues C229 and C230.

It belongs to the small GTPase superfamily. Rab family.

It localises to the cell membrane. The sequence is that of Ras-related protein RabP (rabP) from Dictyostelium discoideum (Social amoeba).